The following is a 216-amino-acid chain: MSIAHIVDWRLYVVTDAGLSRGRSHRAVIEAAIVGGATVVQYREKHASTRQMIEEALELRDLTRRAGVPLIVNDRVDVALAVDADGVHVGQDDMPVALARRLIGNKLLGVSAHNLSEALQAVRDGADYLGVGPIFATTTKPDAAAPIGLDGLRAIRQHVSIPIVAIGGINQANAADVMRAGADGIAVVSAVVAADDVTAAARQLRALVSVTQEKAL.

4-amino-2-methyl-5-(diphosphooxymethyl)pyrimidine is bound by residues 41–45 and Asn-73; that span reads QYREK. Asp-74 and Asp-93 together coordinate Mg(2+). Position 111 (Ser-111) interacts with 4-amino-2-methyl-5-(diphosphooxymethyl)pyrimidine. 137–139 is a 2-[(2R,5Z)-2-carboxy-4-methylthiazol-5(2H)-ylidene]ethyl phosphate binding site; it reads TTT. Lys-140 provides a ligand contact to 4-amino-2-methyl-5-(diphosphooxymethyl)pyrimidine. Residues Gly-168 and 188-189 contribute to the 2-[(2R,5Z)-2-carboxy-4-methylthiazol-5(2H)-ylidene]ethyl phosphate site; that span reads VS.

This sequence belongs to the thiamine-phosphate synthase family. It depends on Mg(2+) as a cofactor.

It carries out the reaction 2-[(2R,5Z)-2-carboxy-4-methylthiazol-5(2H)-ylidene]ethyl phosphate + 4-amino-2-methyl-5-(diphosphooxymethyl)pyrimidine + 2 H(+) = thiamine phosphate + CO2 + diphosphate. It catalyses the reaction 2-(2-carboxy-4-methylthiazol-5-yl)ethyl phosphate + 4-amino-2-methyl-5-(diphosphooxymethyl)pyrimidine + 2 H(+) = thiamine phosphate + CO2 + diphosphate. The enzyme catalyses 4-methyl-5-(2-phosphooxyethyl)-thiazole + 4-amino-2-methyl-5-(diphosphooxymethyl)pyrimidine + H(+) = thiamine phosphate + diphosphate. It participates in cofactor biosynthesis; thiamine diphosphate biosynthesis; thiamine phosphate from 4-amino-2-methyl-5-diphosphomethylpyrimidine and 4-methyl-5-(2-phosphoethyl)-thiazole: step 1/1. In terms of biological role, condenses 4-methyl-5-(beta-hydroxyethyl)thiazole monophosphate (THZ-P) and 2-methyl-4-amino-5-hydroxymethyl pyrimidine pyrophosphate (HMP-PP) to form thiamine monophosphate (TMP). This Chloroflexus aurantiacus (strain ATCC 29366 / DSM 635 / J-10-fl) protein is Thiamine-phosphate synthase.